The sequence spans 695 residues: DNA topoisomerase 4 subunit B (695 aa).

The segment at 1-53 (MSSSDKIPSLFGDDDALAPVPAAPFKASVEPRVEPTPRPIPPPPPSKTASAPG) is disordered. Over residues 36–46 (TPRPIPPPPPS) the composition is skewed to pro residues. Residues tyrosine 55, asparagine 95, aspartate 122, 164–170 (GLHGVGA), and lysine 397 each bind ATP. The Toprim domain maps to 477–591 (AELFIVEGDS…GGHLFLALPP (115 aa)). Mg(2+) is bound by residues glutamate 483, aspartate 556, and aspartate 558.

Belongs to the type II topoisomerase family. ParE type 1 subfamily. As to quaternary structure, heterotetramer composed of ParC and ParE. Mg(2+) serves as cofactor. Requires Mn(2+) as cofactor. It depends on Ca(2+) as a cofactor.

It catalyses the reaction ATP-dependent breakage, passage and rejoining of double-stranded DNA.. Functionally, topoisomerase IV is essential for chromosome segregation. It relaxes supercoiled DNA. Performs the decatenation events required during the replication of a circular DNA molecule. This Caulobacter vibrioides (strain ATCC 19089 / CIP 103742 / CB 15) (Caulobacter crescentus) protein is DNA topoisomerase 4 subunit B.